We begin with the raw amino-acid sequence, 489 residues long: Glutamyl-tRNA(Gln) amidotransferase subunit A (489 aa).

Active-site charge relay system residues include Lys77 and Ser152. Catalysis depends on Ser176, which acts as the Acyl-ester intermediate.

Belongs to the amidase family. GatA subfamily. Heterotrimer of A, B and C subunits.

The enzyme catalyses L-glutamyl-tRNA(Gln) + L-glutamine + ATP + H2O = L-glutaminyl-tRNA(Gln) + L-glutamate + ADP + phosphate + H(+). Its function is as follows. Allows the formation of correctly charged Gln-tRNA(Gln) through the transamidation of misacylated Glu-tRNA(Gln) in organisms which lack glutaminyl-tRNA synthetase. The reaction takes place in the presence of glutamine and ATP through an activated gamma-phospho-Glu-tRNA(Gln). The sequence is that of Glutamyl-tRNA(Gln) amidotransferase subunit A from Protochlamydia amoebophila (strain UWE25).